The sequence spans 848 residues: Heat shock protein 70 homolog lhs1 (848 aa).

Positions 1 to 21 (MKRSVLTIILFFSCQFWHAFA) are cleaved as a signal peptide. 11 N-linked (GlcNAc...) asparagine glycosylation sites follow: Asn134, Asn247, Asn359, Asn457, Asn462, Asn488, Asn555, Asn632, Asn678, Asn733, and Asn817. Positions 784 to 848 (KLKAKKGASS…QQEIDDSDEL (65 aa)) are disordered. Composition is skewed to polar residues over residues 807–822 (TNDI…TSTQ) and 829–840 (ASVTQRPSSLQQ). The short motif at 845–848 (SDEL) is the Prevents secretion from ER element.

It belongs to the heat shock protein 70 family.

It localises to the endoplasmic reticulum lumen. It carries out the reaction ATP + H2O = ADP + phosphate + H(+). Its function is as follows. Chaperone required for protein translocation and folding in the endoplasmic reticulum. This Schizosaccharomyces pombe (strain 972 / ATCC 24843) (Fission yeast) protein is Heat shock protein 70 homolog lhs1.